Here is a 317-residue protein sequence, read N- to C-terminus: Taste receptor type 2 member 7 (317 aa).

The Extracellular portion of the chain corresponds to 1-9 (MTDKVQTTL). Residues 10–30 (LFLAIGEFSVGILGNAFIGLV) form a helical membrane-spanning segment. The Cytoplasmic portion of the chain corresponds to 31-55 (NCMDWVKKRKIASIDLILTSLAISR). Residues 56–76 (ICLLCVILLDCFMLVLYPDVY) traverse the membrane as a helical segment. Over 77–94 (ATGKQMRIIDFFWTLTNH) the chain is Extracellular. The chain crosses the membrane as a helical span at residues 95-115 (LSIWFATCLSIYYFFKIANFF). The Cytoplasmic portion of the chain corresponds to 116-128 (HPLFLWMKWRIDR). A helical membrane pass occupies residues 129–149 (VISWILLGCMVLSVFINLPAT). The Extracellular segment spans residues 150–187 (ENLNADFRRCVKAKRKTNLTWSCRVTKAQHASTKLFLN). Asparagine 167 carries an N-linked (GlcNAc...) asparagine glycan. Residues 188–208 (LVTLLPFSVCLVSFFLLILSL) traverse the membrane as a helical segment. Topologically, residues 209-235 (WRHIRRMQLSATGCRDPSTEAHVRALK) are cytoplasmic. A helical transmembrane segment spans residues 236-256 (AVISFLFLFIAYYLSFLIATS). Over 257 to 266 (SYFIPETELA) the chain is Extracellular. The chain crosses the membrane as a helical span at residues 267-287 (VIFGEFIALIYPSSHSFILIL). Over 288–317 (GNNKLRRASLKVLWTVMSILKGRKFQQKQI) the chain is Cytoplasmic.

Belongs to the G-protein coupled receptor T2R family.

It localises to the membrane. In terms of biological role, gustducin-coupled receptor implicated in the perception of bitter compounds in the oral cavity and the gastrointestinal tract. Signals through PLCB2 and the calcium-regulated cation channel TRPM5. The chain is Taste receptor type 2 member 7 (TAS2R7) from Papio hamadryas (Hamadryas baboon).